An 89-amino-acid polypeptide reads, in one-letter code: Small ribosomal subunit protein uS19 (89 aa).

Belongs to the universal ribosomal protein uS19 family.

Functionally, protein S19 forms a complex with S13 that binds strongly to the 16S ribosomal RNA. The chain is Small ribosomal subunit protein uS19 from Phocaeicola vulgatus (strain ATCC 8482 / DSM 1447 / JCM 5826 / CCUG 4940 / NBRC 14291 / NCTC 11154) (Bacteroides vulgatus).